The primary structure comprises 83 residues: Hainantoxin-III 5 (83 aa).

The N-terminal stretch at 1-21 (MKASRFLALAGLVLLFVVGYA) is a signal peptide. Residues 22–48 (SESEEKEFPRELLSKIFAVDDFKGEER) constitute a propeptide that is removed on maturation. Disulfide bonds link C50–C65, C57–C70, and C64–C77. Position 81 is a leucine amide (L81).

It belongs to the neurotoxin 10 (Hwtx-1) family. 15 (Hntx-3) subfamily. As to quaternary structure, monomer. In terms of tissue distribution, expressed by the venom gland.

The protein resides in the secreted. Its function is as follows. Selective antagonist of neuronal tetrodotoxin (TTX)-sensitive voltage-gated sodium channels (IC(50)=1270 nM on Nav1.1/SCN1A, 270 nM on Nav1.2/SCN2A, 491 nM on Nav1.3/SCN3A and 232 nM on Nav1.7/SCN9A). This toxin suppress Nav1.7 current amplitude without significantly altering the activation, inactivation, and repriming kinetics. Short extreme depolarizations partially activate the toxin-bound channel, indicating voltage-dependent inhibition of this toxin. This toxin increases the deactivation of the Nav1.7 current after extreme depolarizations. The toxin-Nav1.7 complex is gradually dissociated upon prolonged strong depolarizations in a voltage-dependent manner, and the unbound toxin rebinds to Nav1.7 after a long repolarization. Moreover, analysis of chimeric channels showed that the DIIS3-S4 linker is critical for toxin binding to Nav1.7. These data are consistent with this toxin interacting with Nav1.7 site 4 and trapping the domain II voltage sensor in the closed state. The chain is Hainantoxin-III 5 from Cyriopagopus hainanus (Chinese bird spider).